The sequence spans 102 residues: MFAIIRTGGKQLRVSEGQEIFVEKLPINPEQNYEFKEVLAVYGEKSILGQPYVEGAKVQAQVIKNDRAKKIIVFKYKRRKKYRCKQGHRQAYTKLLITKIIA.

The protein belongs to the bacterial ribosomal protein bL21 family. Part of the 50S ribosomal subunit. Contacts protein L20.

Its function is as follows. This protein binds to 23S rRNA in the presence of protein L20. This Phytoplasma australiense protein is Large ribosomal subunit protein bL21.